Consider the following 308-residue polypeptide: MNETSSYTIEEVAGLLKVSKLTVYDLIKKGVLPAYRVGRQMRVDEEDLKQYKTNMRMSQPIAAKEAPKQVQEAEPDGRPNVMISGQDISMDILSKHLENAIQETPLRKYKGSLNSLIDMYQGKCDIVSLHLYDAETGQYNAPYVKRILTGEPFCLINVVLRKAGLYVQKGNPKNIQGWKDLKRADIRIINREKGSGARVLLDEQLGLLGVNPADVVGYGDIVTDHYAAASQVSSGQADAGIGAQHAAHMGSVDFIPLIDEQYDIVVLKKNEQLLKAVKEILNSEDYKANLSHLNGYETKLTGKVILET.

This is an uncharacterized protein from Bacillus subtilis (strain 168).